The following is a 130-amino-acid chain: MPITQNYGTGRRKSSTARVFLRKGSGNISVNGRPLDEFFGRETARMIVRQPLELTKNVSNFDILITATGGGTTGQAGAIRLGIARALVEYDTSLKPELRKAGFMTRDPREVERKKVGLHKARRATQFSKR.

The segment at 111-130 (VERKKVGLHKARRATQFSKR) is disordered. A compositionally biased stretch (basic residues) spans 116–130 (VGLHKARRATQFSKR).

It belongs to the universal ribosomal protein uS9 family.

The protein is Small ribosomal subunit protein uS9 of Xylella fastidiosa (strain M23).